A 153-amino-acid chain; its full sequence is Large ribosomal subunit protein bL9 (153 aa).

Belongs to the bacterial ribosomal protein bL9 family.

Its function is as follows. Binds to the 23S rRNA. The sequence is that of Large ribosomal subunit protein bL9 from Micrococcus luteus (strain ATCC 4698 / DSM 20030 / JCM 1464 / CCM 169 / CCUG 5858 / IAM 1056 / NBRC 3333 / NCIMB 9278 / NCTC 2665 / VKM Ac-2230) (Micrococcus lysodeikticus).